The following is a 664-amino-acid chain: UvrABC system protein B (664 aa).

The 146-residue stretch at 25–170 (NSILLGNKYQ…FVGQRISIKE (146 aa)) folds into the Helicase ATP-binding domain. Residue 38–45 (GVTGSGKT) coordinates ATP. Residues 91 to 114 (YYDYYQPESYVPSKDLFIEKEATI) carry the Beta-hairpin motif. Residues 429-595 (QMEDLYIEIQ…TIVKKIQNIL (167 aa)) enclose the Helicase C-terminal domain. The UVR domain maps to 622 to 657 (KKLIDKLKFELEEAVNDERFEDAIVLRDKIKELGSK).

The protein belongs to the UvrB family. As to quaternary structure, forms a heterotetramer with UvrA during the search for lesions. Interacts with UvrC in an incision complex.

The protein localises to the cytoplasm. Its function is as follows. The UvrABC repair system catalyzes the recognition and processing of DNA lesions. A damage recognition complex composed of 2 UvrA and 2 UvrB subunits scans DNA for abnormalities. Upon binding of the UvrA(2)B(2) complex to a putative damaged site, the DNA wraps around one UvrB monomer. DNA wrap is dependent on ATP binding by UvrB and probably causes local melting of the DNA helix, facilitating insertion of UvrB beta-hairpin between the DNA strands. Then UvrB probes one DNA strand for the presence of a lesion. If a lesion is found the UvrA subunits dissociate and the UvrB-DNA preincision complex is formed. This complex is subsequently bound by UvrC and the second UvrB is released. If no lesion is found, the DNA wraps around the other UvrB subunit that will check the other stand for damage. The polypeptide is UvrABC system protein B (Borreliella afzelii (strain PKo) (Borrelia afzelii)).